The primary structure comprises 93 residues: Sec-independent protein translocase protein TatA (93 aa).

The chain crosses the membrane as a helical span at residues 1–21 (MGIFDWKHWIVILVVVVLVFG). A disordered region spans residues 43-93 (MNDDEKPAEPVVPPAAQPVPPVQPQQSAPLNQPHTIDVQAQKVEEPTRKDS). Over residues 52–65 (PVVPPAAQPVPPVQ) the composition is skewed to pro residues. Positions 84–93 (KVEEPTRKDS) are enriched in basic and acidic residues.

This sequence belongs to the TatA/E family. As to quaternary structure, the Tat system comprises two distinct complexes: a TatABC complex, containing multiple copies of TatA, TatB and TatC subunits, and a separate TatA complex, containing only TatA subunits. Substrates initially bind to the TatABC complex, which probably triggers association of the separate TatA complex to form the active translocon.

The protein resides in the cell inner membrane. Its function is as follows. Part of the twin-arginine translocation (Tat) system that transports large folded proteins containing a characteristic twin-arginine motif in their signal peptide across membranes. TatA could form the protein-conducting channel of the Tat system. The sequence is that of Sec-independent protein translocase protein TatA from Pseudomonas fluorescens (strain ATCC BAA-477 / NRRL B-23932 / Pf-5).